The sequence spans 620 residues: Extensin (620 aa).

The first 20 residues, 1-20 (MKLSTLFALVLLLQSTAILS), serve as a signal peptide directing secretion. Over residues 34 to 45 (LPPPVTSQPPPS) the composition is skewed to pro residues. Positions 34 to 620 (LPPPVTSQPP…PPYGLLLSTP (587 aa)) are disordered. One copy of the H-A-P-P repeat lies at 70 to 73 (HAPP). Residues 106 to 129 (NPPPSPVISPSHPPPSYGAPPPSH) show a composition bias toward pro residues. The segment covering 145–163 (SHGHAPPSGGHTPPRGQHP) has biased composition (low complexity). An H-A-P-P repeat occupies 148 to 151 (HAPP). Residues 164 to 177 (PSHRRPSPPSRHGH) are compositionally biased toward basic residues. Positions 178–219 (PPPPTYAQPPPTPIYSPSPQVQPPPTYSPPPPTHVQPTPSPP) are enriched in pro residues. A contains the Ser-Pro(4) repeats region spans residues 205–620 (SPPPPTHVQP…PPYGLLLSTP (416 aa)). Tandem repeats lie at residues 229–235 (THRHAPP) and 236–242 (THRHAPP). Positions 229–241 (THRHAPPTHRHAP) are enriched in basic residues. Positions 229 to 242 (THRHAPPTHRHAPP) are 2 X 7 AA tandem repeats of T-H-R-H-A-P-P. Pro residues-rich tracts occupy residues 251–552 (HLPP…PPHW) and 562–613 (GQPP…PPPY). Residues 499 to 600 (PPTFSPPPPR…PTPTYGQPPS (102 aa)) are 3 X approximate tandem repeats.

Hydroxylated on proline residues in the S-P-P-P-P repeat. Post-translationally, O-glycosylated on hydroxyprolines. In terms of tissue distribution, expressed in the tip of the emerging lateral roots.

Its subcellular location is the secreted. The protein localises to the primary cell wall. Functionally, has a specialized structural function, possibly in the mechanical penetration of the cortex and epidermis of the main root. This chain is Extensin (HRGPNT3), found in Nicotiana tabacum (Common tobacco).